The primary structure comprises 246 residues: Enolase-phosphatase E1 (246 aa).

Aspartate 15 and glutamate 17 together coordinate Mg(2+). Substrate contacts are provided by residues 134–135 and lysine 174; that span reads SS. Aspartate 201 contributes to the Mg(2+) binding site.

The protein belongs to the HAD-like hydrolase superfamily. MasA/MtnC family. As to quaternary structure, monomer. Mg(2+) is required as a cofactor.

The protein resides in the cytoplasm. It is found in the nucleus. It carries out the reaction 5-methylsulfanyl-2,3-dioxopentyl phosphate + H2O = 1,2-dihydroxy-5-(methylsulfanyl)pent-1-en-3-one + phosphate. The protein operates within amino-acid biosynthesis; L-methionine biosynthesis via salvage pathway; L-methionine from S-methyl-5-thio-alpha-D-ribose 1-phosphate: step 3/6. It functions in the pathway amino-acid biosynthesis; L-methionine biosynthesis via salvage pathway; L-methionine from S-methyl-5-thio-alpha-D-ribose 1-phosphate: step 4/6. In terms of biological role, bifunctional enzyme that catalyzes the enolization of 2,3-diketo-5-methylthiopentyl-1-phosphate (DK-MTP-1-P) into the intermediate 2-hydroxy-3-keto-5-methylthiopentenyl-1-phosphate (HK-MTPenyl-1-P), which is then dephosphorylated to form the acireductone 1,2-dihydroxy-3-keto-5-methylthiopentene (DHK-MTPene). The sequence is that of Enolase-phosphatase E1 from Debaryomyces hansenii (strain ATCC 36239 / CBS 767 / BCRC 21394 / JCM 1990 / NBRC 0083 / IGC 2968) (Yeast).